The primary structure comprises 562 residues: SLAIN motif-containing protein-like (562 aa).

3 disordered regions span residues 292-313, 344-381, and 409-562; these read QDYA…LHSL, HRYS…IQNH, and SLEA…DGCY. Low complexity-rich tracts occupy residues 295–311 and 345–355; these read ASSS…ASLH and RYSPSPLSSPR. 4 stretches are compositionally biased toward polar residues: residues 356–370, 424–442, 465–531, and 539–553; these read CQSP…TTSR, QGPS…STPP, VSTS…STVP, and SRRS…STLG.

This sequence belongs to the SLAIN motif-containing family.

The polypeptide is SLAIN motif-containing protein-like (Xenopus laevis (African clawed frog)).